Here is a 185-residue protein sequence, read N- to C-terminus: uncharacterized protein (185 aa).

A run of 5 helical transmembrane segments spans residues 4–24 (TYLTGYFPLIAILLFSSSLSI), 54–74 (LALFAAFALLYFMVLSALKLI), 98–118 (LRMGSMIYLGGGILSFVLLQN), 119–139 (VIWIVIWFAVVTLAYFVFTVY), and 153–173 (FILLELLFWFTFVIGILFIFI).

It localises to the cell membrane. This is an uncharacterized protein from Bacillus subtilis (strain 168).